A 201-amino-acid polypeptide reads, in one-letter code: Acireductone dioxygenase 2 (201 aa).

H83, H85, E89, and H129 together coordinate Fe(2+). H83, H85, E89, and H129 together coordinate Ni(2+).

This sequence belongs to the acireductone dioxygenase (ARD) family. Fe(2+) serves as cofactor. Ni(2+) is required as a cofactor.

It is found in the cytoplasm. It localises to the nucleus. The enzyme catalyses 1,2-dihydroxy-5-(methylsulfanyl)pent-1-en-3-one + O2 = 4-methylsulfanyl-2-oxobutanoate + formate + 2 H(+). It carries out the reaction 1,2-dihydroxy-5-(methylsulfanyl)pent-1-en-3-one + O2 = 3-(methylsulfanyl)propanoate + CO + formate + 2 H(+). It functions in the pathway amino-acid biosynthesis; L-methionine biosynthesis via salvage pathway; L-methionine from S-methyl-5-thio-alpha-D-ribose 1-phosphate: step 5/6. Its function is as follows. Catalyzes 2 different reactions between oxygen and the acireductone 1,2-dihydroxy-3-keto-5-methylthiopentene (DHK-MTPene) depending upon the metal bound in the active site. Fe-containing acireductone dioxygenase (Fe-ARD) produces formate and 2-keto-4-methylthiobutyrate (KMTB), the alpha-ketoacid precursor of methionine in the methionine recycle pathway. Ni-containing acireductone dioxygenase (Ni-ARD) produces methylthiopropionate, carbon monoxide and formate, and does not lie on the methionine recycle pathway. The protein is Acireductone dioxygenase 2 of Coprinopsis cinerea (strain Okayama-7 / 130 / ATCC MYA-4618 / FGSC 9003) (Inky cap fungus).